The sequence spans 158 residues: NAD(P)H-quinone oxidoreductase subunit J, chloroplastic (158 aa).

It belongs to the complex I 30 kDa subunit family. NDH is composed of at least 16 different subunits, 5 of which are encoded in the nucleus.

It localises to the plastid. It is found in the chloroplast thylakoid membrane. The catalysed reaction is a plastoquinone + NADH + (n+1) H(+)(in) = a plastoquinol + NAD(+) + n H(+)(out). The enzyme catalyses a plastoquinone + NADPH + (n+1) H(+)(in) = a plastoquinol + NADP(+) + n H(+)(out). NDH shuttles electrons from NAD(P)H:plastoquinone, via FMN and iron-sulfur (Fe-S) centers, to quinones in the photosynthetic chain and possibly in a chloroplast respiratory chain. The immediate electron acceptor for the enzyme in this species is believed to be plastoquinone. Couples the redox reaction to proton translocation, and thus conserves the redox energy in a proton gradient. This is NAD(P)H-quinone oxidoreductase subunit J, chloroplastic from Oenothera argillicola (Appalachian evening primrose).